Reading from the N-terminus, the 191-residue chain is Chromobox protein homolog 5 (191 aa).

Residues 1–21 (MGKKTKRTADSSSSEDEEEYV) form a disordered region. 4 positions are modified to phosphoserine: serine 11, serine 12, serine 13, and serine 14. Residues 20–78 (YVVEKVLDRRMVKGQVEYLLKWKGFSEEHNTWEPEKNLDCPELISEFMKKYKKMKEGEN) form the Chromo 1 domain. A Glycyl lysine isopeptide (Lys-Gly) (interchain with G-Cter in SUMO2) cross-link involves residue lysine 32. An N6-acetyllysine modification is found at lysine 40. Residues 70 to 117 (YKKMKEGENNKPREKSEGNKRKSSFSNSADDIKSKKKREQSNDIARGF) are disordered. The span at 73-89 (MKEGENNKPREKSEGNK) shows a compositional bias: basic and acidic residues. Lysine 91 participates in a covalent cross-link: Glycyl lysine isopeptide (Lys-Gly) (interchain with G-Cter in SUMO2). A phosphoserine mark is found at serine 92, serine 93, serine 95, and serine 97. Glycyl lysine isopeptide (Lys-Gly) (interchain with G-Cter in SUMO2) cross-links involve residues lysine 102, lysine 106, lysine 154, and lysine 184. One can recognise a Chromo 2; shadow subtype domain in the interval 121 to 179 (LEPEKIIGATDSCGDLMFLMKWKDTDEADLVLAKEANVKCPQIVIAFYEERLTWHAYPE).

In terms of assembly, homodimer. Interacts with histone H3 methylated at 'Lys-9'. Interacts (via Chromo 2; shadow subtype domain) with the MIS12 complex subunit NSL1; the interaction is direct, involves dimeric CBX5, and occurs during interphase. Interacts with POGZ; POGZ and PXVXL motif-containing proteins such as INCENP and TRIM28 compete for interaction with CBX5. Interacts with LRIF1 (via PxVxL motif). Interacts with INCENP. Interacts with TRIM24. Interacts (via the chromoshadow domain) with ATRX; the interaction is direct. Interacts (via the chromoshadow domain) with CHAF1A; the interaction is direct. Interacts (via the chromoshadow domain) with LBR; the interaction is direct. Interacts (via the chromoshadow domain) with NIPBL; the interaction is direct. Interacts (via the chromoshadow domain) with SP100; the interaction is direct. Interacts (via the chromoshadow domain) with STAM2; the interaction is direct. Interacts (via the chromoshadow domain) with TRIM28; the interaction is direct. Interacts (via the chromoshadow domain) with CBX3; the interaction is direct. Interacts with PRR14 (via N-terminus). Interacts with RRP1B. Interacts with HNRNPU (via C-terminus); this interaction is, at least in part, RNA-dependent. Interacts with ZNF263; recruited to the SIX3 promoter along with other proteins involved in chromatin modification and transcriptional corepression where it contributes to transcriptional repression. Interacts with AURKB during mitosis. Interacts with CHAMP1. Interacts with BAHD1. Interacts with HP1BP3. Interacts with CHD3. Interacts with CHD4. Interacts with SMYD5. Interacts with KMT5B. Interacts with KMT5C. In terms of processing, phosphorylation of HP1 and LBR may be responsible for some of the alterations in chromatin organization and nuclear structure which occur at various times during the cell cycle. Phosphorylated during interphase and possibly hyper-phosphorylated during mitosis. Post-translationally, ubiquitinated.

Its subcellular location is the nucleus. The protein resides in the chromosome. The protein localises to the centromere. Its function is as follows. Component of heterochromatin that recognizes and binds histone H3 tails methylated at 'Lys-9' (H3K9me), leading to epigenetic repression. In contrast, it is excluded from chromatin when 'Tyr-41' of histone H3 is phosphorylated (H3Y41ph). May contribute to the association of heterochromatin with the inner nuclear membrane by interactions with the lamin-B receptor (LBR). Involved in the formation of kinetochore through interaction with the MIS12 complex subunit NSL1. Required for the formation of the inner centromere. In terms of biological role, component of heterochromatin that recognizes and binds histone H3 tails methylated at 'Lys-9' (H3K9me), leading to epigenetic repression. In contrast, it is excluded from chromatin when 'Tyr-41' of histone H3 is phosphorylated (H3Y41ph). Can interact with lamin-B receptor (LBR). This interaction can contribute to the association of the heterochromatin with the inner nuclear membrane. Involved in the formation of functional kinetochore through interaction with MIS12 complex proteins. In Mus musculus (Mouse), this protein is Chromobox protein homolog 5 (Cbx5).